A 143-amino-acid chain; its full sequence is Putative nickel-responsive regulator (143 aa).

Positions 82, 97, 99, and 105 each coordinate Ni(2+).

This sequence belongs to the transcriptional regulatory CopG/NikR family. It depends on Ni(2+) as a cofactor.

Functionally, transcriptional regulator. The chain is Putative nickel-responsive regulator from Helicobacter hepaticus (strain ATCC 51449 / 3B1).